The chain runs to 67 residues: Conotoxin Cl6.6b (67 aa).

The first 24 residues, 1-24 (MKLTCVLIAAVLLLAVCQLDSADA), serve as a signal peptide directing secretion. The propeptide occupies 25–37 (TGYMRKNPSLRSP). Cystine bridges form between Cys-43–Cys-57, Cys-50–Cys-61, and Cys-56–Cys-65.

The protein belongs to the conotoxin O1 superfamily. In terms of tissue distribution, expressed by the venom duct.

It is found in the secreted. The protein is Conotoxin Cl6.6b of Californiconus californicus (California cone).